The primary structure comprises 226 residues: Translation initiation factor IF-3 (226 aa).

The disordered stretch occupies residues 195–226 (FVPLAPLSPEDLIEEPELESESDSDAEPESDN). Acidic residues predominate over residues 205–226 (DLIEEPELESESDSDAEPESDN).

Belongs to the IF-3 family. In terms of assembly, monomer.

The protein localises to the cytoplasm. IF-3 binds to the 30S ribosomal subunit and shifts the equilibrium between 70S ribosomes and their 50S and 30S subunits in favor of the free subunits, thus enhancing the availability of 30S subunits on which protein synthesis initiation begins. The sequence is that of Translation initiation factor IF-3 from Chlorobium chlorochromatii (strain CaD3).